The following is a 183-amino-acid chain: MRVGMGYDVHKLVKDRKLIMGGVEIPYELGLLGHSDADVLLHAIMDALLGAAALGDIGKHFPDTDDRYKGISSIKLLEEVGKKIDEANYIIENIDATIIAQKPKMRPYIDDMRKNIADALKIDVDRVNVKATTEEGLGFTGSGEGISSQAICSLNSVSNYIYGAADMTNCRSDCGGCMGCQNK.

The a divalent metal cation site is built by Asp8 and His10. Residues 8–10 (DVH) and 34–35 (HS) contribute to the 4-CDP-2-C-methyl-D-erythritol 2-phosphate site. A divalent metal cation is bound at residue His42. Residues 56 to 58 (DIG), 61 to 65 (FPDTD), 132 to 135 (TTEE), and Phe139 each bind 4-CDP-2-C-methyl-D-erythritol 2-phosphate.

Belongs to the IspF family. In terms of assembly, homotrimer. A divalent metal cation serves as cofactor.

It carries out the reaction 4-CDP-2-C-methyl-D-erythritol 2-phosphate = 2-C-methyl-D-erythritol 2,4-cyclic diphosphate + CMP. Its pathway is isoprenoid biosynthesis; isopentenyl diphosphate biosynthesis via DXP pathway; isopentenyl diphosphate from 1-deoxy-D-xylulose 5-phosphate: step 4/6. In terms of biological role, involved in the biosynthesis of isopentenyl diphosphate (IPP) and dimethylallyl diphosphate (DMAPP), two major building blocks of isoprenoid compounds. Catalyzes the conversion of 4-diphosphocytidyl-2-C-methyl-D-erythritol 2-phosphate (CDP-ME2P) to 2-C-methyl-D-erythritol 2,4-cyclodiphosphate (ME-CPP) with a corresponding release of cytidine 5-monophosphate (CMP). The polypeptide is 2-C-methyl-D-erythritol 2,4-cyclodiphosphate synthase (Lachnospira eligens (strain ATCC 27750 / DSM 3376 / VPI C15-48 / C15-B4) (Eubacterium eligens)).